Here is a 265-residue protein sequence, read N- to C-terminus: Eukaryotic translation initiation factor 3 subunit J (265 aa).

Residues 1–71 (MSWDDEAING…KESSADRALL (71 aa)) form a disordered region. Residues 23-32 (WDAEIGDDEP) show a composition bias toward acidic residues. Basic and acidic residues predominate over residues 42-71 (EEKKPAPKPKKEQPKKVKKGKESSADRALL). S65 bears the Phosphoserine mark. At T75 the chain carries Phosphothreonine. S92 is subject to Phosphoserine. Residues 219 to 265 (VRGGTATGGAGKKKVKGKTNLGGAFKKDQDFDLDGPDDFEFGDDDFM) are disordered. R220 carries the post-translational modification Omega-N-methylarginine. Residues 249–265 (FDLDGPDDFEFGDDDFM) show a composition bias toward acidic residues.

Belongs to the eIF-3 subunit J family. As to quaternary structure, probable component of the eukaryotic translation initiation factor 3 (eIF-3) complex. Is not part of the eIF-3 core complex, with which it is associated in substochiometric amounts.

The protein resides in the cytoplasm. In terms of biological role, component of the eukaryotic translation initiation factor 3 (eIF-3) complex, which is involved in protein synthesis of a specialized repertoire of mRNAs and, together with other initiation factors, stimulates binding of mRNA and methionyl-tRNAi to the 40S ribosome. The eIF-3 complex specifically targets and initiates translation of a subset of mRNAs involved in cell proliferation. The sequence is that of Eukaryotic translation initiation factor 3 subunit J from Saccharomyces cerevisiae (strain ATCC 204508 / S288c) (Baker's yeast).